The sequence spans 75 residues: MPAVFLLLRSLVVRLFGSRLAASGVQLLRRILTTATGHLGTVLRNIWERISSQQSKEAILGCVLCLLNMHKKVDN.

Residues 1-5 are Cytoplasmic-facing; sequence MPAVF. A helical membrane pass occupies residues 6–28; that stretch reads LLLRSLVVRLFGSRLAASGVQLL. Residues 29 to 75 lie on the Extracellular side of the membrane; sequence RRILTTATGHLGTVLRNIWERISSQQSKEAILGCVLCLLNMHKKVDN. An AxLyCxL motif is present at residues 58-67; it reads AILGCVLCLL.

This sequence belongs to the MYMX family. In terms of tissue distribution, specifically expressed in the developing myotome.

It is found in the cell membrane. Its function is as follows. Myoblast-specific protein that mediates myoblast fusion, an essential step for the formation of multi-nucleated muscle fibers. Involved in membrane fusion downstream of the lipid mixing step mediated by mymk. Acts by generating membrane stresses via its extracellular C-terminus, leading to drive fusion pore formation. The protein is Protein myomixer of Danio rerio (Zebrafish).